Reading from the N-terminus, the 232-residue chain is Small ribosomal subunit protein uS2 (232 aa).

Belongs to the universal ribosomal protein uS2 family.

This is Small ribosomal subunit protein uS2 from Desulforamulus reducens (strain ATCC BAA-1160 / DSM 100696 / MI-1) (Desulfotomaculum reducens).